A 121-amino-acid chain; its full sequence is Mediator of RNA polymerase II transcription subunit 22 (121 aa).

The protein belongs to the Mediator complex subunit 22 family. Component of the Mediator complex.

Its subcellular location is the nucleus. Component of the Mediator complex, a coactivator involved in the regulated transcription of nearly all RNA polymerase II-dependent genes. Mediator functions as a bridge to convey information from gene-specific regulatory proteins to the basal RNA polymerase II transcription machinery. Mediator is recruited to promoters by direct interactions with regulatory proteins and serves as a scaffold for the assembly of a functional preinitiation complex with RNA polymerase II and the general transcription factors. The protein is Mediator of RNA polymerase II transcription subunit 22 (SRB6) of Kluyveromyces lactis (strain ATCC 8585 / CBS 2359 / DSM 70799 / NBRC 1267 / NRRL Y-1140 / WM37) (Yeast).